The sequence spans 297 residues: Bifunctional protein FolD (297 aa).

Residues 164–166 (GRS), Ser193, and Ile234 each bind NADP(+).

The protein belongs to the tetrahydrofolate dehydrogenase/cyclohydrolase family. As to quaternary structure, homodimer.

It catalyses the reaction (6R)-5,10-methylene-5,6,7,8-tetrahydrofolate + NADP(+) = (6R)-5,10-methenyltetrahydrofolate + NADPH. It carries out the reaction (6R)-5,10-methenyltetrahydrofolate + H2O = (6R)-10-formyltetrahydrofolate + H(+). It participates in one-carbon metabolism; tetrahydrofolate interconversion. Functionally, catalyzes the oxidation of 5,10-methylenetetrahydrofolate to 5,10-methenyltetrahydrofolate and then the hydrolysis of 5,10-methenyltetrahydrofolate to 10-formyltetrahydrofolate. This chain is Bifunctional protein FolD, found in Halobacterium salinarum (strain ATCC 700922 / JCM 11081 / NRC-1) (Halobacterium halobium).